Here is a 272-residue protein sequence, read N- to C-terminus: HMP-PP phosphatase (272 aa).

Residue D8 is the Nucleophile of the active site. Residues D8, D10, and D212 each contribute to the Mg(2+) site.

It belongs to the HAD-like hydrolase superfamily. Cof family. Mg(2+) serves as cofactor.

It catalyses the reaction 4-amino-2-methyl-5-(diphosphooxymethyl)pyrimidine + H2O = 4-amino-2-methyl-5-(phosphooxymethyl)pyrimidine + phosphate + H(+). Functionally, catalyzes the hydrolysis of 4-amino-2-methyl-5-hydroxymethylpyrimidine pyrophosphate (HMP-PP) to 4-amino-2-methyl-5-hydroxymethylpyrimidine phosphate (HMP-P). The sequence is that of HMP-PP phosphatase from Shigella flexneri serotype 5b (strain 8401).